Consider the following 214-residue polypeptide: Cytolysin tenebrosin-B (214 aa).

Residues 1–19 (MNRLIIVFIVVTMICAATA) form the signal peptide. The propeptide occupies 20–35 (LSTKRRINKEEKDEKR). Residues 38–47 (AVAGAVIEGA) form a plays an important role in the hemolytic activity region. The N-terminal region stretch occupies residues 46–65 (GATLTFNVLQTVLKALGDIS). Phosphocholine-binding residues include Ser-89, Val-122, Ser-140, Pro-142, Tyr-168, Tyr-172, and Tyr-173. The trp-rich region, which is important for the binding to lipid membrane stretch occupies residues 140–155 (SIPFDYNLYSNWWNVK). Residues 179 to 181 (RGD) carry the Cell attachment site, crucial for protein stability motif.

Belongs to the actinoporin family. Sea anemone subfamily. In terms of assembly, octamer or nonamer in membranes. Monomer in the soluble state.

It is found in the secreted. It localises to the nematocyst. The protein localises to the target cell membrane. In terms of biological role, pore-forming protein that forms cations-selective hydrophilic pores of around 1 nm and causes cardiac stimulation and cytolysis. Pore formation is a multi-step process that involves specific recognition of membrane sphingomyelin (but neither cholesterol nor phosphatidylcholine) using aromatic rich region and adjacent phosphocholine (POC) binding site, firm binding to the membrane (mainly driven by hydrophobic interactions) accompanied by the transfer of the N-terminal region to the lipid-water interface and finally pore formation after oligomerization of monomers. The protein is Cytolysin tenebrosin-B of Actinia tenebrosa (Australian red waratah sea anemone).